The primary structure comprises 416 residues: 5-hydroxytryptamine receptor 1A-beta (416 aa).

Residues 1 to 35 are Extracellular-facing; the sequence is MEGTNNTTGWTHFDSTSNRTSKSFDEEVKLSYQVV. Residues asparagine 5, asparagine 6, and asparagine 18 are each glycosylated (N-linked (GlcNAc...) asparagine). A helical membrane pass occupies residues 36–56; it reads TSFLLGALILCSIFGNACVVA. Residues 57–70 are Cytoplasmic-facing; sequence AIALERSLQNVANY. The helical transmembrane segment at 71-95 threads the bilayer; sequence LIGSLAVTDLMVSVLVLPMAALYQV. The Extracellular segment spans residues 96 to 104; it reads LNRWTLGQI. Residues 105–129 form a helical membrane-spanning segment; that stretch reads PCDIFISLDMLCCTSSILHLCVIAL. Cysteine 106 and cysteine 189 are disulfide-bonded. Residues aspartate 113 and cysteine 117 each coordinate serotonin. Residues 130–132 carry the DRY motif; important for ligand-induced conformation changes motif; sequence DRY. Residues 130 to 149 are Cytoplasmic-facing; sequence DRYWAITEPIDYMKKRTPRR. A helical membrane pass occupies residues 150–171; the sequence is AAVLISVTWLVGFSISIPPMLI. Residues 172-195 lie on the Extracellular side of the membrane; the sequence is MRSQPSSMAEDRANSKQCKITQDP. The helical transmembrane segment at 196-218 threads the bilayer; sequence WYTIYSTFGAFYIPLTLMLVLYG. Residues 219 to 340 lie on the Cytoplasmic side of the membrane; it reads RIFKAARFRI…LARERKTVKT (122 aa). 3 residues coordinate 1D-myo-inositol 4-phosphate: lysine 339, threonine 340, and glycine 346. The helical transmembrane segment at 341–364 threads the bilayer; it reads LGIIMGTFILCWLPFFIVALVMPF. Residues 365–372 are Extracellular-facing; sequence CQESCFMP. The chain crosses the membrane as a helical span at residues 373–397; it reads HWLKDVINWLGYSNSLLNPIIYAYF. Residues 390-394 carry the NPxxY motif; important for ligand-induced conformation changes and signaling motif; it reads NPIIY. Positions 397, 398, and 399 each coordinate 1D-myo-inositol 4-phosphate. At 398 to 416 the chain is on the cytoplasmic side; sequence NKDFQSAFKKIIKCHFCRA.

It belongs to the G-protein coupled receptor 1 family. 5-hydroxytryptamine receptor subfamily.

It is found in the cell membrane. Its activity is regulated as follows. G-protein coupled receptor activity is regulated by lipids: phosphatidylinositol 4-phosphate increases HTR1A-mediated activity. Functionally, G-protein coupled receptor for 5-hydroxytryptamine (serotonin). Also functions as a receptor for various drugs and psychoactive substances. Ligand binding causes a conformation change that triggers signaling via guanine nucleotide-binding proteins (G proteins) and modulates the activity of downstream effectors, such as adenylate cyclase. HTR1A is coupled to G(i)/G(o) G alpha proteins and mediates inhibitory neurotransmission: signaling inhibits adenylate cyclase activity and activates a phosphatidylinositol-calcium second messenger system that regulates the release of Ca(2+) ions from intracellular stores. Beta-arrestin family members regulate signaling by mediating both receptor desensitization and resensitization processes. This is 5-hydroxytryptamine receptor 1A-beta (htr1a-B) from Takifugu rubripes (Japanese pufferfish).